The chain runs to 293 residues: Urease accessory protein UreD (293 aa).

Belongs to the UreD family. UreD, UreF and UreG form a complex that acts as a GTP-hydrolysis-dependent molecular chaperone, activating the urease apoprotein by helping to assemble the nickel containing metallocenter of UreC. The UreE protein probably delivers the nickel.

It localises to the cytoplasm. In terms of biological role, required for maturation of urease via the functional incorporation of the urease nickel metallocenter. The chain is Urease accessory protein UreD from Cupriavidus metallidurans (strain ATCC 43123 / DSM 2839 / NBRC 102507 / CH34) (Ralstonia metallidurans).